The sequence spans 996 residues: Protein psiR (996 aa).

The signal sequence occupies residues 1-21 (MKKIILMLLLFSIFFILKSES). N-linked (GlcNAc...) asparagine glycosylation is found at N79, N117, N323, N396, N428, N474, N500, N645, and N779. The 146-residue stretch at 105–250 (QSLSNPNIYS…YDECGVCEGD (146 aa)) folds into the PA14 domain.

The protein belongs to the prespore-cell-inducing factor family.

The protein resides in the secreted. The polypeptide is Protein psiR (psiR) (Dictyostelium discoideum (Social amoeba)).